Reading from the N-terminus, the 369-residue chain is Chaperone protein DnaJ (369 aa).

In terms of domain architecture, J spans 4-69 (SYYEILEVEK…KKRALYDRYG (66 aa)). A CR-type zinc finger spans residues 130 to 207 (GCKKTIKAQY…CKGKTYILKD (78 aa)). Zn(2+) is bound by residues Cys-143, Cys-146, Cys-159, Cys-162, Cys-181, Cys-184, Cys-195, and Cys-198. CXXCXGXG motif repeat units follow at residues 143-150 (CESCDGTG), 159-166 (CKQCNGQG), 181-188 (CGACQGKG), and 195-202 (CQACKGKT).

The protein belongs to the DnaJ family. In terms of assembly, homodimer. It depends on Zn(2+) as a cofactor.

Its subcellular location is the cytoplasm. Functionally, participates actively in the response to hyperosmotic and heat shock by preventing the aggregation of stress-denatured proteins and by disaggregating proteins, also in an autonomous, DnaK-independent fashion. Unfolded proteins bind initially to DnaJ; upon interaction with the DnaJ-bound protein, DnaK hydrolyzes its bound ATP, resulting in the formation of a stable complex. GrpE releases ADP from DnaK; ATP binding to DnaK triggers the release of the substrate protein, thus completing the reaction cycle. Several rounds of ATP-dependent interactions between DnaJ, DnaK and GrpE are required for fully efficient folding. Also involved, together with DnaK and GrpE, in the DNA replication of plasmids through activation of initiation proteins. This is Chaperone protein DnaJ from Helicobacter pylori (strain J99 / ATCC 700824) (Campylobacter pylori J99).